The chain runs to 157 residues: SsrA-binding protein (157 aa).

Residues 133-157 (LHDKRETAKERDWQRDKARLMRDKG) are disordered. Basic and acidic residues predominate over residues 135 to 157 (DKRETAKERDWQRDKARLMRDKG).

The protein belongs to the SmpB family.

Its subcellular location is the cytoplasm. In terms of biological role, required for rescue of stalled ribosomes mediated by trans-translation. Binds to transfer-messenger RNA (tmRNA), required for stable association of tmRNA with ribosomes. tmRNA and SmpB together mimic tRNA shape, replacing the anticodon stem-loop with SmpB. tmRNA is encoded by the ssrA gene; the 2 termini fold to resemble tRNA(Ala) and it encodes a 'tag peptide', a short internal open reading frame. During trans-translation Ala-aminoacylated tmRNA acts like a tRNA, entering the A-site of stalled ribosomes, displacing the stalled mRNA. The ribosome then switches to translate the ORF on the tmRNA; the nascent peptide is terminated with the 'tag peptide' encoded by the tmRNA and targeted for degradation. The ribosome is freed to recommence translation, which seems to be the essential function of trans-translation. The polypeptide is SsrA-binding protein (Methylobacterium sp. (strain 4-46)).